Consider the following 204-residue polypeptide: Methylthioribulose-1-phosphate dehydratase (204 aa).

Zn(2+) contacts are provided by histidine 95 and histidine 97.

It belongs to the aldolase class II family. MtnB subfamily. The cofactor is Zn(2+).

It catalyses the reaction 5-(methylsulfanyl)-D-ribulose 1-phosphate = 5-methylsulfanyl-2,3-dioxopentyl phosphate + H2O. It participates in amino-acid biosynthesis; L-methionine biosynthesis via salvage pathway; L-methionine from S-methyl-5-thio-alpha-D-ribose 1-phosphate: step 2/6. In terms of biological role, catalyzes the dehydration of methylthioribulose-1-phosphate (MTRu-1-P) into 2,3-diketo-5-methylthiopentyl-1-phosphate (DK-MTP-1-P). This chain is Methylthioribulose-1-phosphate dehydratase, found in Parvibaculum lavamentivorans (strain DS-1 / DSM 13023 / NCIMB 13966).